A 62-amino-acid chain; its full sequence is Translational regulator CsrA (62 aa).

It belongs to the CsrA/RsmA family. In terms of assembly, homodimer; the beta-strands of each monomer intercalate to form a hydrophobic core, while the alpha-helices form wings that extend away from the core.

The protein localises to the cytoplasm. In terms of biological role, a key translational regulator that binds mRNA to regulate translation initiation and/or mRNA stability. Mediates global changes in gene expression, shifting from rapid growth to stress survival by linking envelope stress, the stringent response and the catabolite repression systems. Usually binds in the 5'-UTR; binding at or near the Shine-Dalgarno sequence prevents ribosome-binding, repressing translation, binding elsewhere in the 5'-UTR can activate translation and/or stabilize the mRNA. Its function is antagonized by small RNA(s). This Haemophilus ducreyi (strain 35000HP / ATCC 700724) protein is Translational regulator CsrA.